Here is a 201-residue protein sequence, read N- to C-terminus: Small ribosomal subunit protein uS4c (201 aa).

The region spanning 89-157 is the S4 RNA-binding domain; the sequence is MRLDNILFRL…VQNYIASSDP (69 aa).

The protein belongs to the universal ribosomal protein uS4 family. As to quaternary structure, part of the 30S ribosomal subunit. Contacts protein S5. The interaction surface between S4 and S5 is involved in control of translational fidelity.

It is found in the plastid. It localises to the chloroplast. In terms of biological role, one of the primary rRNA binding proteins, it binds directly to 16S rRNA where it nucleates assembly of the body of the 30S subunit. Its function is as follows. With S5 and S12 plays an important role in translational accuracy. The polypeptide is Small ribosomal subunit protein uS4c (rps4) (Triticum aestivum (Wheat)).